The sequence spans 148 residues: Pseudoazurin (148 aa).

Residues 1–25 (MMIFRALIAAATLAIAIATTLPAAA) form the signal peptide. The 89-residue stretch at 30 to 118 (VKMLNSGPGG…MGMVALVVVG (89 aa)) folds into the Plastocyanin-like domain. Cu cation is bound by residues His65, Cys103, His106, and Met111.

Requires Cu cation as cofactor.

The protein localises to the periplasm. The chain is Pseudoazurin from Methylorubrum extorquens (strain ATCC 14718 / DSM 1338 / JCM 2805 / NCIMB 9133 / AM1) (Methylobacterium extorquens).